We begin with the raw amino-acid sequence, 263 residues long: 3-methyl-2-oxobutanoate hydroxymethyltransferase (263 aa).

Mg(2+) is bound by residues aspartate 43 and aspartate 82. 3-methyl-2-oxobutanoate-binding positions include aspartate 43–serine 44, aspartate 82, and lysine 111. Mg(2+) is bound at residue glutamate 113. Residue glutamate 179 is the Proton acceptor of the active site.

It belongs to the PanB family. As to quaternary structure, homodecamer; pentamer of dimers. It depends on Mg(2+) as a cofactor.

Its subcellular location is the cytoplasm. It carries out the reaction 3-methyl-2-oxobutanoate + (6R)-5,10-methylene-5,6,7,8-tetrahydrofolate + H2O = 2-dehydropantoate + (6S)-5,6,7,8-tetrahydrofolate. It participates in cofactor biosynthesis; (R)-pantothenate biosynthesis; (R)-pantoate from 3-methyl-2-oxobutanoate: step 1/2. Its function is as follows. Catalyzes the reversible reaction in which hydroxymethyl group from 5,10-methylenetetrahydrofolate is transferred onto alpha-ketoisovalerate to form ketopantoate. This is 3-methyl-2-oxobutanoate hydroxymethyltransferase from Neisseria gonorrhoeae (strain ATCC 700825 / FA 1090).